The chain runs to 235 residues: Ribitol-5-phosphate cytidylyltransferase (235 aa).

CTP contacts are provided by residues 7–10, 82–88, and Ser-113; these read LAGG and GADRNTS.

This sequence belongs to the IspD/TarI cytidylyltransferase family. TarI subfamily.

The catalysed reaction is D-ribitol 5-phosphate + CTP + H(+) = CDP-L-ribitol + diphosphate. It functions in the pathway cell wall biogenesis; poly(ribitol phosphate) teichoic acid biosynthesis. Catalyzes the transfer of the cytidylyl group of CTP to D-ribitol 5-phosphate. This chain is Ribitol-5-phosphate cytidylyltransferase, found in Streptococcus pneumoniae (strain ATCC 700669 / Spain 23F-1).